We begin with the raw amino-acid sequence, 337 residues long: Glyceraldehyde-3-phosphate dehydrogenase, cytosolic (337 aa).

NAD(+) is bound by residues 13 to 14 (RI), Asp-35, and Arg-82. D-glyceraldehyde 3-phosphate is bound by residues 153-155 (SCT), Thr-184, 213-214 (TG), and Arg-236. Catalysis depends on Cys-154, which acts as the Nucleophile. Position 318 (Asn-318) interacts with NAD(+).

Belongs to the glyceraldehyde-3-phosphate dehydrogenase family. Homotetramer.

It localises to the cytoplasm. The enzyme catalyses D-glyceraldehyde 3-phosphate + phosphate + NAD(+) = (2R)-3-phospho-glyceroyl phosphate + NADH + H(+). It participates in carbohydrate degradation; glycolysis; pyruvate from D-glyceraldehyde 3-phosphate: step 1/5. Its function is as follows. Key enzyme in glycolysis that catalyzes the first step of the pathway by converting D-glyceraldehyde 3-phosphate (G3P) into 3-phospho-D-glyceroyl phosphate. Essential for the maintenance of cellular ATP levels and carbohydrate metabolism. This is Glyceraldehyde-3-phosphate dehydrogenase, cytosolic (GAPC) from Antirrhinum majus (Garden snapdragon).